The sequence spans 314 residues: Testis-specific Y-encoded protein 9 (314 aa).

The protein belongs to the nucleosome assembly protein (NAP) family.

It is found in the cytoplasm. It localises to the nucleus. May be involved in sperm differentiation and proliferation. This is Testis-specific Y-encoded protein 9 from Homo sapiens (Human).